The primary structure comprises 508 residues: Photosystem II CP47 reaction center protein (508 aa).

Helical transmembrane passes span 21-36, 101-115, 140-156, 203-218, 237-252, and 457-472; these read SVHI…WAGS, IVFS…IWHW, GIHL…FGAF, IAAG…FHLS, VLSS…AFVV, and TFAL…HGAR.

The protein belongs to the PsbB/PsbC family. PsbB subfamily. As to quaternary structure, PSII is composed of 1 copy each of membrane proteins PsbA, PsbB, PsbC, PsbD, PsbE, PsbF, PsbH, PsbI, PsbJ, PsbK, PsbL, PsbM, PsbT, PsbX, PsbY, PsbZ, Psb30/Ycf12, at least 3 peripheral proteins of the oxygen-evolving complex and a large number of cofactors. It forms dimeric complexes. Binds multiple chlorophylls. PSII binds additional chlorophylls, carotenoids and specific lipids. is required as a cofactor.

Its subcellular location is the plastid. The protein localises to the chloroplast thylakoid membrane. Its function is as follows. One of the components of the core complex of photosystem II (PSII). It binds chlorophyll and helps catalyze the primary light-induced photochemical processes of PSII. PSII is a light-driven water:plastoquinone oxidoreductase, using light energy to abstract electrons from H(2)O, generating O(2) and a proton gradient subsequently used for ATP formation. The chain is Photosystem II CP47 reaction center protein from Calycanthus floridus var. glaucus (Eastern sweetshrub).